The sequence spans 94 residues: MKISREEVEHVAFLARLELTEEELVTNTEQLNSILDYAAMLEKLNTDDIKPTAHAVPLHNVLREDQVKPSMAREKVLANAPDAQDGFFKVPRIV.

This sequence belongs to the GatC family. As to quaternary structure, heterotrimer of A, B and C subunits.

It catalyses the reaction L-glutamyl-tRNA(Gln) + L-glutamine + ATP + H2O = L-glutaminyl-tRNA(Gln) + L-glutamate + ADP + phosphate + H(+). The enzyme catalyses L-aspartyl-tRNA(Asn) + L-glutamine + ATP + H2O = L-asparaginyl-tRNA(Asn) + L-glutamate + ADP + phosphate + 2 H(+). Allows the formation of correctly charged Asn-tRNA(Asn) or Gln-tRNA(Gln) through the transamidation of misacylated Asp-tRNA(Asn) or Glu-tRNA(Gln) in organisms which lack either or both of asparaginyl-tRNA or glutaminyl-tRNA synthetases. The reaction takes place in the presence of glutamine and ATP through an activated phospho-Asp-tRNA(Asn) or phospho-Glu-tRNA(Gln). The polypeptide is Aspartyl/glutamyl-tRNA(Asn/Gln) amidotransferase subunit C (Desulfitobacterium hafniense (strain DSM 10664 / DCB-2)).